The primary structure comprises 785 residues: Endonuclease MutS2 (785 aa).

332–339 (GPNTGGKT) lines the ATP pocket. Positions 710-785 (IDLRGLDAEE…GDGATIVELK (76 aa)) constitute a Smr domain.

It belongs to the DNA mismatch repair MutS family. MutS2 subfamily. In terms of assembly, homodimer. Binds to stalled ribosomes, contacting rRNA.

Endonuclease that is involved in the suppression of homologous recombination and thus may have a key role in the control of bacterial genetic diversity. Its function is as follows. Acts as a ribosome collision sensor, splitting the ribosome into its 2 subunits. Detects stalled/collided 70S ribosomes which it binds and splits by an ATP-hydrolysis driven conformational change. Acts upstream of the ribosome quality control system (RQC), a ribosome-associated complex that mediates the extraction of incompletely synthesized nascent chains from stalled ribosomes and their subsequent degradation. Probably generates substrates for RQC. The protein is Endonuclease MutS2 of Clostridium botulinum (strain Alaska E43 / Type E3).